A 125-amino-acid polypeptide reads, in one-letter code: Transmembrane protein 14EP (125 aa).

A run of 2 helical transmembrane segments spans residues 9 to 29 (VPLYWLGFVYAALAALGGISG) and 81 to 101 (ILTLWNIYACGFSCRCLLIVS).

This sequence belongs to the TMEM14 family.

Its subcellular location is the membrane. This chain is Transmembrane protein 14EP (TMEM14EP), found in Homo sapiens (Human).